A 1129-amino-acid polypeptide reads, in one-letter code: Translation initiation factor IF-2 (1129 aa).

Low complexity-rich tracts occupy residues 33 to 42 (AARSHSSSIS) and 56 to 99 (GGSP…AAKP). 2 disordered regions span residues 33-462 (AARS…IGEN) and 485-515 (SLAR…ETAR). Residues 100–112 (SPKPSAPSRPEAP) show a composition bias toward pro residues. A compositionally biased stretch (low complexity) spans 135-147 (STPAAAAPAAAPS). Pro residues predominate over residues 148–161 (APAPSAPTPRPKPT). Residues 162-175 (APKASAPAPTASAP) are compositionally biased toward low complexity. Composition is skewed to pro residues over residues 176-191 (SAPP…PAPA) and 211-221 (PTAPPTRPQPK). The segment covering 257–273 (GQRPGVSPRPSGPPGQR) has biased composition (low complexity). The span at 431-445 (GRPDWDDSAKLEALR) shows a compositional bias: basic and acidic residues. 2 stretches are compositionally biased toward basic residues: residues 490 to 499 (SKPRTKHKPA) and 506 to 515 (IRKRRKETAR). In terms of domain architecture, tr-type G spans 621-793 (RRPPVVTVMG…ILLVTEVEDL (173 aa)). The tract at residues 630 to 637 (GHVDHGKT) is G1. 630-637 (GHVDHGKT) lines the GTP pocket. Residues 655-659 (GITQH) are G2. The tract at residues 680–683 (DTPG) is G3. Residues 680 to 684 (DTPGH) and 734 to 737 (NKID) contribute to the GTP site. Positions 734–737 (NKID) are G4. The tract at residues 770–772 (SAL) is G5.

It belongs to the TRAFAC class translation factor GTPase superfamily. Classic translation factor GTPase family. IF-2 subfamily.

It is found in the cytoplasm. One of the essential components for the initiation of protein synthesis. Protects formylmethionyl-tRNA from spontaneous hydrolysis and promotes its binding to the 30S ribosomal subunits. Also involved in the hydrolysis of GTP during the formation of the 70S ribosomal complex. In Synechococcus sp. (strain CC9311), this protein is Translation initiation factor IF-2.